We begin with the raw amino-acid sequence, 79 residues long: Ferredoxin (79 aa).

4Fe-4S ferredoxin-type domains follow at residues 2-30 (PHVI…YDGG) and 31-60 (DQFY…PEED). Residues Cys-9 and Cys-17 each coordinate [3Fe-4S] cluster. Cys-21, Cys-40, Cys-43, and Cys-46 together coordinate [4Fe-4S] cluster. Cys-50 is a [3Fe-4S] cluster binding site.

Requires [4Fe-4S] cluster as cofactor. [3Fe-4S] cluster is required as a cofactor.

In terms of biological role, ferredoxins are iron-sulfur proteins that transfer electrons in a wide variety of metabolic reactions. This is Ferredoxin from Thermus thermophilus (strain ATCC 27634 / DSM 579 / HB8).